The chain runs to 440 residues: Protein disulfide-isomerase 2-3 (440 aa).

Residues 1 to 24 (MYKSPLTLLTLLTICFGFFDLSSA) form the signal peptide. Thioredoxin domains lie at 25-136 (LYGS…KQIK) and 154-269 (SKEK…ELVE). Residues C60 and C63 each act as nucleophile in the active site. A disulfide bond links C60 and C63. Residues 143-163 (LEGKSKPTGGGSKEKKSEPSA) are disordered. The N-linked (GlcNAc...) asparagine glycan is linked to N168. Active-site nucleophile residues include C192 and C195. The cysteines at positions 192 and 195 are disulfide-linked. A Prevents secretion from ER motif is present at residues 437–440 (KDEL).

The protein belongs to the protein disulfide isomerase family. In terms of tissue distribution, widely expressed.

It is found in the endoplasmic reticulum lumen. It carries out the reaction Catalyzes the rearrangement of -S-S- bonds in proteins.. Its function is as follows. Acts as a protein-folding catalyst that interacts with nascent polypeptides to catalyze the formation, isomerization, and reduction or oxidation of disulfide bonds. This chain is Protein disulfide-isomerase 2-3 (PDIL2-3), found in Arabidopsis thaliana (Mouse-ear cress).